A 977-amino-acid chain; its full sequence is Serine/threonine-protein kinase N2 (977 aa).

3 REM-1 domains span residues 24 to 100 (NLDF…HIVV), 114 to 194 (DTPK…TSEI), and 200 to 280 (DVTT…ELPK). One can recognise a C2 domain in the interval 298–468 (PPNSPRQSIM…LYLEPQGTLF (171 aa)). Disordered regions lie at residues 342-381 (GRSKTASVSLPGWSPSEARSSFMSRGNKNKSGSSRTLSKS) and 531-576 (AADL…KRNS). Residues 358-378 (EARSSFMSRGNKNKSGSSRTL) are compositionally biased toward polar residues. Residues 650 to 909 (FKCVAVLGRG…AEEVKRHPFF (260 aa)) enclose the Protein kinase domain. ATP contacts are provided by residues 656–664 (LGRGHFGKV) and lysine 679. The active-site Proton acceptor is aspartate 775. The AGC-kinase C-terminal domain maps to 910 to 977 (RDMDWPGLLA…ADFDYIADWC (68 aa)).

Belongs to the protein kinase superfamily. AGC Ser/Thr protein kinase family. PKC subfamily. Autophosphorylated. Phosphorylated. In terms of processing, proteolytically cleaved.

It is found in the cytoplasm. The protein localises to the nucleus. Its subcellular location is the membrane. It localises to the cell projection. The protein resides in the lamellipodium. It is found in the cytoskeleton. The protein localises to the cleavage furrow. Its subcellular location is the midbody. It localises to the cell junction. It carries out the reaction L-seryl-[protein] + ATP = O-phospho-L-seryl-[protein] + ADP + H(+). The catalysed reaction is L-threonyl-[protein] + ATP = O-phospho-L-threonyl-[protein] + ADP + H(+). Kinase activity is activated upon binding to GTP-bound Rho/Rac GTPases. Activated by lipids, particularly cardiolipin and to a lesser extent by other acidic phospholipids and unsaturated fatty acids. Two specific sites, Thr-809 (activation loop of the kinase domain) and Thr-951 (turn motif), may be needed to be phosphorylated for its full activation. In terms of biological role, pkc-related serine/threonine-protein kinase and Rho/Rac effector protein that participates in specific signal transduction responses in the cell. May play a role in the regulation of cell cycle progression, actin cytoskeleton assembly, cell migration, cell adhesion and transcription activation signaling processes. The protein is Serine/threonine-protein kinase N2 (pkn2) of Danio rerio (Zebrafish).